Consider the following 418-residue polypeptide: Gamma-glutamyl phosphate reductase (418 aa).

The protein belongs to the gamma-glutamyl phosphate reductase family.

The protein localises to the cytoplasm. It carries out the reaction L-glutamate 5-semialdehyde + phosphate + NADP(+) = L-glutamyl 5-phosphate + NADPH + H(+). It participates in amino-acid biosynthesis; L-proline biosynthesis; L-glutamate 5-semialdehyde from L-glutamate: step 2/2. Catalyzes the NADPH-dependent reduction of L-glutamate 5-phosphate into L-glutamate 5-semialdehyde and phosphate. The product spontaneously undergoes cyclization to form 1-pyrroline-5-carboxylate. The polypeptide is Gamma-glutamyl phosphate reductase (Geobacter sp. (strain M21)).